The chain runs to 1252 residues: Elongator complex protein 1 (1252 aa).

Residues 814–1252 (VDVNDLYNVA…MMDWQHEILQ (439 aa)) are mediates dimerization. Ser-1094 is subject to Phosphoserine. The interval 1097–1116 (SSQYSGTSRRTGKTFRSSKN) is disordered. Residues 1106-1116 (RTGKTFRSSKN) are compositionally biased toward basic residues. Residues 1111-1129 (FRSSKNRRKHERKLFSLKP) are required for binding to tRNA.

Belongs to the ELP1/IKA1 family. As to quaternary structure, homodimer. Component of the elongator complex composed of Elp1, Elp2, Elp3, Elp4, Elp5 and Elp6. The elongator complex associates with and stabilizes microtubules; efficient interaction requires the full complex.

It localises to the cytoplasm. The protein resides in the nucleus. Its subcellular location is the cytoskeleton. The protein localises to the spindle. It functions in the pathway tRNA modification; 5-methoxycarbonylmethyl-2-thiouridine-tRNA biosynthesis. In terms of biological role, component of the elongator complex, which is required for multiple tRNA modifications, including mcm5U (5-methoxycarbonylmethyl uridine), mcm5s2U (5-methoxycarbonylmethyl-2-thiouridine), and ncm5U (5-carbamoylmethyl uridine). The elongator complex catalyzes formation of carboxymethyluridine in the wobble base at position 34 in tRNAs. ELP1 binds to tRNA, mediating interaction of the elongator complex with tRNA. Binding by the elongator complex stabilizes microtubules and promotes their growth. This induces central spindle asymmetry, promoting polarized signaling endosome trafficking during asymmetric cell division and cell fate assignation of sensory organ precursor cells. Involved in protein synthesis-dependent long-term memory formation, probably as part of the elongator complex. The sequence is that of Elongator complex protein 1 from Drosophila melanogaster (Fruit fly).